Here is a 124-residue protein sequence, read N- to C-terminus: Large ribosomal subunit protein bL12 (124 aa).

The protein belongs to the bacterial ribosomal protein bL12 family. Homodimer. Part of the ribosomal stalk of the 50S ribosomal subunit. Forms a multimeric L10(L12)X complex, where L10 forms an elongated spine to which 2 to 4 L12 dimers bind in a sequential fashion. Binds GTP-bound translation factors.

Functionally, forms part of the ribosomal stalk which helps the ribosome interact with GTP-bound translation factors. Is thus essential for accurate translation. This chain is Large ribosomal subunit protein bL12, found in Hamiltonella defensa subsp. Acyrthosiphon pisum (strain 5AT).